Here is a 166-residue protein sequence, read N- to C-terminus: Disulfide bond formation protein B (166 aa).

The Cytoplasmic portion of the chain corresponds to 1–11 (MIALPRNRRPL). A helical membrane pass occupies residues 12–28 (FLAVFAYCAALLAFGLY). Over 29–46 (LQHYQGIEPCPMCIMQRY) the chain is Periplasmic. Cysteines 38 and 41 form a disulfide. A helical membrane pass occupies residues 47–63 (AFALVGVIALVAGLHGP). The Cytoplasmic segment spans residues 64–70 (RGAGVRV). The chain crosses the membrane as a helical span at residues 71–87 (YGGLLLLTALAGGSVAA). At 88-143 (RQTWMQLYPPEIPECGPGLEYMLESFPLTSALPMIFRGAGDCSAIDWTFLGLSLAN) the chain is on the periplasmic side. A disulfide bond links Cys102 and Cys129. Residues 144 to 162 (WSLLNFGAAALLALWLLFG) traverse the membrane as a helical segment. Residues 163–166 (RRVR) are Cytoplasmic-facing.

The protein belongs to the DsbB family.

The protein localises to the cell inner membrane. In terms of biological role, required for disulfide bond formation in some periplasmic proteins. Acts by oxidizing the DsbA protein. The polypeptide is Disulfide bond formation protein B (Azoarcus sp. (strain BH72)).